A 231-amino-acid polypeptide reads, in one-letter code: Somatolactin (231 aa).

Residues 1–24 (MNMMTVKQQGVWAALLWPYLLTAS) form the signal peptide. Disulfide bonds link Cys-29–Cys-39, Cys-89–Cys-205, and Cys-222–Cys-230. An N-linked (GlcNAc...) asparagine glycan is attached at Asn-145.

Belongs to the somatotropin/prolactin family. Pituitary gland.

It localises to the secreted. This chain is Somatolactin, found in Paralichthys olivaceus (Bastard halibut).